We begin with the raw amino-acid sequence, 214 residues long: Osteoclast-stimulating factor 1 (214 aa).

The SH3 domain occupies Gly-12–Glu-71. ANK repeat units lie at residues Ser-72 to Gly-101, Ala-105 to Gln-135, and Leu-139 to Leu-168.

Its subcellular location is the cytoplasm. Its function is as follows. Induces bone resorption, acting probably through a signaling cascade which results in the secretion of factor(s) enhancing osteoclast formation and activity. The protein is Osteoclast-stimulating factor 1 (ostf1) of Xenopus laevis (African clawed frog).